A 201-amino-acid chain; its full sequence is dITP/XTP pyrophosphatase (201 aa).

Residue T8 to K13 coordinates substrate. The active-site Proton acceptor is the D68. D68 lines the Mg(2+) pocket. Substrate-binding positions include S69, F155–D158, K177, and H182–R183.

This sequence belongs to the HAM1 NTPase family. As to quaternary structure, homodimer. Requires Mg(2+) as cofactor.

It catalyses the reaction XTP + H2O = XMP + diphosphate + H(+). It carries out the reaction dITP + H2O = dIMP + diphosphate + H(+). The enzyme catalyses ITP + H2O = IMP + diphosphate + H(+). Pyrophosphatase that catalyzes the hydrolysis of nucleoside triphosphates to their monophosphate derivatives, with a high preference for the non-canonical purine nucleotides XTP (xanthosine triphosphate), dITP (deoxyinosine triphosphate) and ITP. Seems to function as a house-cleaning enzyme that removes non-canonical purine nucleotides from the nucleotide pool, thus preventing their incorporation into DNA/RNA and avoiding chromosomal lesions. This chain is dITP/XTP pyrophosphatase, found in Borreliella burgdorferi (strain ATCC 35210 / DSM 4680 / CIP 102532 / B31) (Borrelia burgdorferi).